Reading from the N-terminus, the 363-residue chain is Aspartate-semialdehyde dehydrogenase (363 aa).

NADP(+) is bound by residues Thr-15, Gly-16, Ser-17, Val-18, Ser-40, Ser-43, and Leu-87. The active-site Acyl-thioester intermediate is Cys-154. Gly-186 is a binding site for NADP(+). Catalysis depends on His-251, which acts as the Proton acceptor. Asn-341 lines the NADP(+) pocket.

It belongs to the aspartate-semialdehyde dehydrogenase family. Homotetramer; dimer of dimers.

The protein localises to the cytoplasm. Its subcellular location is the cytosol. It is found in the nucleus. The enzyme catalyses L-aspartate 4-semialdehyde + phosphate + NADP(+) = 4-phospho-L-aspartate + NADPH + H(+). It functions in the pathway amino-acid biosynthesis; L-methionine biosynthesis via de novo pathway; L-homoserine from L-aspartate: step 2/3. Its pathway is amino-acid biosynthesis; L-threonine biosynthesis; L-threonine from L-aspartate: step 2/5. Inhibited by 4-amino-3-hydroxynaphthalene-1-sulfonic acid and the competitive inhibitor 1,4-benzoquinone and derivates such as 2-chloro-3-methoxy-1,4-naphthoquinone, 2,3-dichloro-1,4-naphthoquinone, 2-chloro-1,4-naphthoquinone, 2-bromo-1,4-naphthoquinone and 2,3-dichloro-5,8-dihydroxy-1,4-naphthoquinone. Its function is as follows. Catalyzes the NADPH-dependent formation of L-aspartate 4-semialdehyde (L-ASA) by the reductive dephosphorylation of 4-phospho-L-aspartate. Mediates the second step in the biosynthesis of amino acids that derive from aspartate (the aspartate family of amino acids), including methioinine and threonine, the latter of which is a precursor to isoleucine. This Aspergillus fumigatus (strain ATCC MYA-4609 / CBS 101355 / FGSC A1100 / Af293) (Neosartorya fumigata) protein is Aspartate-semialdehyde dehydrogenase.